The sequence spans 416 residues: Sarcosine oxidase subunit beta (416 aa).

Positions 41, 42, 63, 71, 76, and 78 each coordinate FAD. H182 is modified (tele-8alpha-FMN histidine). Residues V206, G366, and K368 each coordinate FAD.

This sequence belongs to the SoxB family. In terms of assembly, heterotetramer composed of subunits alpha (SoxA), beta (SoxB), gamma (SoxG) and delta (SoxD). Requires FAD as cofactor. FMN serves as cofactor.

It is found in the cytoplasm. The catalysed reaction is sarcosine + (6S)-5,6,7,8-tetrahydrofolate + O2 = (6R)-5,10-methylene-5,6,7,8-tetrahydrofolate + glycine + H2O2. It catalyses the reaction sarcosine + O2 + H2O = formaldehyde + glycine + H2O2. In the presence of tetrahydrofolate, catalyzes the oxidative demethylation of sarcosine to yield glycine, 5,10-methylenetetrahydrofolate and hydrogen peroxide. In the absence of tetrahydrofolate, catalyzes the oxidative demethylation of sarcosine to yield glycine, formaldehyde and hydrogen peroxide. The chain is Sarcosine oxidase subunit beta (soxB) from Rhizobium meliloti (strain 1021) (Ensifer meliloti).